We begin with the raw amino-acid sequence, 25 residues long: LASP1 neighbor protein (25 aa).

A helical transmembrane segment spans residues 4–24 (IFILMFFAIIGLVILSYIIYL).

The protein resides in the membrane. May play a key role in the skin fibroblasts (FBs)-keratinocyte-like cells (KLCs). This is LASP1 neighbor protein from Homo sapiens (Human).